Consider the following 255-residue polypeptide: Pimeloyl-[acyl-carrier protein] methyl ester esterase (255 aa).

The AB hydrolase-1 domain maps to 16-241 (LVLVHGWGMN…QSSHAPFMTE (226 aa)). Substrate contacts are provided by residues W22, 82–83 (SL), and 143–147 (FMALQ). The active-site Nucleophile is the S82. Active-site residues include D207 and H235. Substrate is bound at residue H235.

Belongs to the AB hydrolase superfamily. Carboxylesterase BioH family. In terms of assembly, monomer.

It localises to the cytoplasm. It carries out the reaction 6-carboxyhexanoyl-[ACP] methyl ester + H2O = 6-carboxyhexanoyl-[ACP] + methanol + H(+). It functions in the pathway cofactor biosynthesis; biotin biosynthesis. Its function is as follows. The physiological role of BioH is to remove the methyl group introduced by BioC when the pimeloyl moiety is complete. It allows to synthesize pimeloyl-ACP via the fatty acid synthetic pathway through the hydrolysis of the ester bonds of pimeloyl-ACP esters. In Vibrio cholerae serotype O1 (strain ATCC 39315 / El Tor Inaba N16961), this protein is Pimeloyl-[acyl-carrier protein] methyl ester esterase.